The following is a 308-amino-acid chain: Putative transcription elongation factor S-II (308 aa).

In terms of domain architecture, TFIIS N-terminal spans 5-84 (EETQSLCKQV…KDWKNVVDGK (80 aa)). The interval 82–126 (DGKSKSQDDGGAPPAKKHRKESVEEAKPEKKKIEAPYKRPEPSSR) is disordered. Positions 102–125 (ESVEEAKPEKKKIEAPYKRPEPSS) are enriched in basic and acidic residues. The TFIIS central domain maps to 148-263 (TRLKSAQLLL…EHQMSVQQGT (116 aa)). Residues 266–306 (DMFKCGKCGKKNCTYTQLQTRSSDEPMTTFVFCLECGNRWK) form a TFIIS-type zinc finger. 4 residues coordinate Zn(2+): Cys-270, Cys-273, Cys-298, and Cys-301.

It belongs to the TFS-II family.

Its subcellular location is the nucleus. In terms of biological role, necessary for efficient RNA polymerase II transcription elongation past template-encoded arresting sites. The arresting sites in DNA have the property of trapping a certain fraction of elongating RNA polymerases that pass through, resulting in locked ternary complexes. Cleavage of the nascent transcript by S-II allows the resumption of elongation from the new 3'-terminus. The protein is Putative transcription elongation factor S-II of Caenorhabditis elegans.